We begin with the raw amino-acid sequence, 883 residues long: Phosphoenolpyruvate carboxylase (883 aa).

Residues His138 and Lys546 contribute to the active site.

Belongs to the PEPCase type 1 family. Requires Mg(2+) as cofactor.

The catalysed reaction is oxaloacetate + phosphate = phosphoenolpyruvate + hydrogencarbonate. In terms of biological role, forms oxaloacetate, a four-carbon dicarboxylic acid source for the tricarboxylic acid cycle. This chain is Phosphoenolpyruvate carboxylase, found in Enterobacter sp. (strain 638).